Consider the following 249-residue polypeptide: tRNA pseudouridine synthase A (249 aa).

Residue Asp-52 is the Nucleophile of the active site. Tyr-111 serves as a coordination point for substrate.

The protein belongs to the tRNA pseudouridine synthase TruA family. In terms of assembly, homodimer.

It carries out the reaction uridine(38/39/40) in tRNA = pseudouridine(38/39/40) in tRNA. Functionally, formation of pseudouridine at positions 38, 39 and 40 in the anticodon stem and loop of transfer RNAs. The protein is tRNA pseudouridine synthase A of Brachyspira hyodysenteriae (strain ATCC 49526 / WA1).